The chain runs to 39 residues: Cytochrome b559 subunit beta (39 aa).

The chain crosses the membrane as a helical span at residues 14 to 30 (WLAVHGLAVPTVFFLGS). Histidine 18 contributes to the heme binding site.

This sequence belongs to the PsbE/PsbF family. As to quaternary structure, heterodimer of an alpha subunit and a beta subunit. PSII is composed of 1 copy each of membrane proteins PsbA, PsbB, PsbC, PsbD, PsbE, PsbF, PsbH, PsbI, PsbJ, PsbK, PsbL, PsbM, PsbT, PsbX, PsbY, PsbZ, Psb30/Ycf12, at least 3 peripheral proteins of the oxygen-evolving complex and a large number of cofactors. It forms dimeric complexes. Requires heme b as cofactor.

It localises to the plastid. It is found in the chloroplast thylakoid membrane. Functionally, this b-type cytochrome is tightly associated with the reaction center of photosystem II (PSII). PSII is a light-driven water:plastoquinone oxidoreductase that uses light energy to abstract electrons from H(2)O, generating O(2) and a proton gradient subsequently used for ATP formation. It consists of a core antenna complex that captures photons, and an electron transfer chain that converts photonic excitation into a charge separation. In Nicotiana glutinosa (Tobacco), this protein is Cytochrome b559 subunit beta.